The sequence spans 502 residues: Probable cytochrome P450 554A1 (502 aa).

Residues L3–Y20 form a helical membrane-spanning segment. Residue C448 participates in heme binding.

This sequence belongs to the cytochrome P450 family. Requires heme as cofactor.

Its subcellular location is the membrane. The protein is Probable cytochrome P450 554A1 (cyp554A1) of Dictyostelium discoideum (Social amoeba).